Consider the following 132-residue polypeptide: Small ribosomal subunit protein uS11 (132 aa).

This sequence belongs to the universal ribosomal protein uS11 family. As to quaternary structure, part of the 30S ribosomal subunit. Interacts with proteins S7 and S18. Binds to IF-3.

In terms of biological role, located on the platform of the 30S subunit, it bridges several disparate RNA helices of the 16S rRNA. Forms part of the Shine-Dalgarno cleft in the 70S ribosome. The polypeptide is Small ribosomal subunit protein uS11 (Cupriavidus pinatubonensis (strain JMP 134 / LMG 1197) (Cupriavidus necator (strain JMP 134))).